The following is a 312-amino-acid chain: Gamma-soluble NSF attachment protein (312 aa).

Positions 281–312 (KKKSPATPQAKPDGVTATAADEEEDEYSGGLC) are disordered. Serine 284 is subject to Phosphoserine. Threonine 287 carries the phosphothreonine modification. Acidic residues predominate over residues 300–312 (ADEEEDEYSGGLC). The residue at position 308 (serine 308) is a Phosphoserine.

Belongs to the SNAP family. Interacts with RAB11FIP5. Interacts with VTI1A.

The protein resides in the membrane. Its subcellular location is the golgi apparatus. Functionally, required for vesicular transport between the endoplasmic reticulum and the Golgi apparatus. The sequence is that of Gamma-soluble NSF attachment protein from Homo sapiens (Human).